A 932-amino-acid polypeptide reads, in one-letter code: Protocadherin gamma-A7 (932 aa).

The signal sequence occupies residues 1 to 28 (MAAQPRGGDCRGFVLLSILLGTPWEAWA). Cadherin domains are found at residues 29–133 (GRIL…VPRF), 134–242 (LTEE…TPVF), 243–347 (SLPQ…APEV), 348–452 (TMTS…PPTF), 453–562 (PHSS…PPEI), and 570–682 (DGST…EPSD). The Extracellular portion of the chain corresponds to 29–692 (GRILYSVSEE…GPYNYDLTLY (664 aa)). 2 N-linked (GlcNAc...) asparagine glycosylation sites follow: Asn-419 and Asn-545. Residues 693–713 (LVVAVAAVSCVFLAFVLVLLA) traverse the membrane as a helical segment. Residues 714-932 (LRLRRWHKSR…KKKSGKKEKK (219 aa)) lie on the Cytoplasmic side of the membrane. 2 disordered regions span residues 804–841 (VPSI…WPNN) and 902–932 (ATLT…KEKK). The span at 806-841 (SIQQAPPNTDWRFSQAQRPGTSGSQNGDDTGTWPNN) shows a compositional bias: polar residues. A compositionally biased stretch (basic residues) spans 922-932 (NKKKSGKKEKK).

The protein localises to the cell membrane. Functionally, potential calcium-dependent cell-adhesion protein. May be involved in the establishment and maintenance of specific neuronal connections in the brain. The sequence is that of Protocadherin gamma-A7 (PCDHGA7) from Pan troglodytes (Chimpanzee).